We begin with the raw amino-acid sequence, 593 residues long: Uncoordinated protein 58 (593 aa).

A run of 6 helical transmembrane segments spans residues 186-206 (VILVSVLIGYLCLGAWILMLL), 291-311 (TFPTALLYVLTVLTTCGYGEV), 320-340 (VFSVAFALVGIPLMFITAADI), 402-422 (PIGAYVSCICLYCSMGSAMFI), 430-450 (FIHAFHFGFNLIVTVGLGDIV), and 455-475 (IFLSLIVAFVIVGLSVVTMCV).

This sequence belongs to the two pore domain potassium channel (TC 1.A.1.8) family.

The protein localises to the membrane. Its function is as follows. Has a role in mobility, possibly in the transport of potassium in muscles. The chain is Uncoordinated protein 58 from Caenorhabditis briggsae.